A 402-amino-acid chain; its full sequence is MSGEVECRVCHAKVQVPMAAAAVSKAYDIHRSSVSSRQRALNVLLVSGDCVLAGLQPILVYMCKVDGKFKFSPVSVNFLTEITKIIFAIIMLCIQARRLKVGEKPFLTVSTFMQAARNNVLLAVPALFYAINNYMKFVMQLYFNPATVKMLGNLKVLVIAVLLKVIMRRRFSTIQWEALALLLIGISVNQLKSLPEGSSTLGLPVAAGAYLYTLFFVTVPALASVYNEKALKSQFDTSIYLQNLFLYGYGAIFNFLGLVITAIIQGPSSFNILEGHSKATMFLICNNAAQGILSSFFFKYADTILKKYSSTIATIFTGVASAVLFGHTLTINFVLAISIVIISMHQYLSNQIKDEVPSSKIEMGDAHEHRSKESVVVNVSDSIATEAKHRHGTDERQPLLPV.

The Cytoplasmic portion of the chain corresponds to 1 to 42; it reads MSGEVECRVCHAKVQVPMAAAAVSKAYDIHRSSVSSRQRALN. A helical membrane pass occupies residues 43 to 63; that stretch reads VLLVSGDCVLAGLQPILVYMC. The Lumenal segment spans residues 64–73; sequence KVDGKFKFSP. Residues 74-94 traverse the membrane as a helical segment; the sequence is VSVNFLTEITKIIFAIIMLCI. The Cytoplasmic portion of the chain corresponds to 95-118; it reads QARRLKVGEKPFLTVSTFMQAARN. Residues 119–139 form a helical membrane-spanning segment; the sequence is NVLLAVPALFYAINNYMKFVM. Topologically, residues 140–146 are lumenal; the sequence is QLYFNPA. A helical membrane pass occupies residues 147–167; sequence TVKMLGNLKVLVIAVLLKVIM. At 168–170 the chain is on the cytoplasmic side; sequence RRR. A helical membrane pass occupies residues 171–191; that stretch reads FSTIQWEALALLLIGISVNQL. Over 192 to 202 the chain is Lumenal; sequence KSLPEGSSTLG. The chain crosses the membrane as a helical span at residues 203 to 223; that stretch reads LPVAAGAYLYTLFFVTVPALA. Over 224–243 the chain is Cytoplasmic; sequence SVYNEKALKSQFDTSIYLQN. The helical transmembrane segment at 244 to 264 threads the bilayer; sequence LFLYGYGAIFNFLGLVITAII. At 265-280 the chain is on the lumenal side; that stretch reads QGPSSFNILEGHSKAT. Residues 281–301 traverse the membrane as a helical segment; sequence MFLICNNAAQGILSSFFFKYA. Residues 302–321 are Cytoplasmic-facing; the sequence is DTILKKYSSTIATIFTGVAS. Residues 322-342 form a helical membrane-spanning segment; it reads AVLFGHTLTINFVLAISIVII. The Lumenal portion of the chain corresponds to 343–402; that stretch reads SMHQYLSNQIKDEVPSSKIEMGDAHEHRSKESVVVNVSDSIATEAKHRHGTDERQPLLPV.

This sequence belongs to the nucleotide-sugar transporter family. CMP-Sialate:CMP antiporter (TC 2.A.7.12) subfamily.

Its subcellular location is the golgi apparatus membrane. In terms of biological role, sugar transporter involved in the transport of CMP-sialic acid from the cytoplasm into the Golgi. May transport important nucleotide sugars such as CMP-Kdo (2-keto-3-deoxy-D-manno-octulosonic acid) in physiological conditions. This Oryza sativa subsp. indica (Rice) protein is CMP-sialic acid transporter 3.